Here is a 173-residue protein sequence, read N- to C-terminus: Calmodulin-like protein 11 (173 aa).

Low complexity predominate over residues 1–26 (MEEIQQQQQQQQQQQQQQQQQQQQQQ). Residues 1 to 27 (MEEIQQQQQQQQQQQQQQQQQQQQQQE) are disordered. 4 consecutive EF-hand domains span residues 31–66 (EQIM…LDQN), 67–102 (PTEQ…QLQE), 104–139 (DADE…LGEK), and 140–173 (LTDE…MING). Residues D44, D46, D48, C50, E55, D80, D82, N84, T86, E91, D117, D119, N121, Y123, E128, D153, D155, D157, Q159, and E164 each contribute to the Ca(2+) site.

Belongs to the calmodulin family.

In terms of biological role, potential calcium sensor. The polypeptide is Calmodulin-like protein 11 (CML11) (Arabidopsis thaliana (Mouse-ear cress)).